Consider the following 1252-residue polypeptide: Protein ITPRID2 (1252 aa).

The tract at residues 28–70 is disordered; it reads CRSSWQASETEDLSTETTTQDEDEDDEEDLPGTKLPAPAGRGN. Over residues 36–57 the composition is skewed to acidic residues; sequence ETEDLSTETTTQDEDEDDEEDL. At threonine 85 the chain carries Phosphothreonine. Phosphoserine is present on residues serine 90, serine 109, serine 207, serine 268, and serine 328. Disordered stretches follow at residues 306-483, 552-575, and 595-636; these read DKTE…HVPA, HVTPTAQDQPYFNESEEESLAPLQ, and FPQC…GELP. Over residues 357 to 372 the composition is skewed to low complexity; that stretch reads TVTEEVSGSSSTVTDS. Basic and acidic residues-rich tracts occupy residues 395-407 and 415-428; these read SREAHSQEKDPLR and DLGHDGRVSSHCEL. The segment covering 429–441 has biased composition (low complexity); sequence ESSSELKSAQASS. The residue at position 465 (serine 465) is a Phosphoserine. Phosphoserine occurs at positions 643, 667, 736, 738, 745, 758, and 766. Lysine 807 is covalently cross-linked (Glycyl lysine isopeptide (Lys-Gly) (interchain with G-Cter in SUMO2)). 2 positions are modified to phosphoserine: serine 866 and serine 898. Residues 955 to 1031 are a coiled coil; sequence QELQVVRRSL…LLGLDEQLRA (77 aa). 5 positions are modified to phosphoserine: serine 1036, serine 1051, serine 1056, serine 1059, and serine 1114. Disordered regions lie at residues 1095–1131 and 1147–1180; these read GESSESVFSQATSESSSVCSSPSHTNRRSRGLPGSKP and ALTPTAPSRTGSVQTPPDLESSEEAGGAEEASPV. Low complexity predominate over residues 1103–1117; the sequence is SQATSESSSVCSSPS. Residue threonine 1149 is modified to Phosphothreonine. The span at 1151-1161 shows a compositional bias: polar residues; sequence TAPSRTGSVQT. Position 1154 is a phosphoserine (serine 1154). Threonine 1161 carries the post-translational modification Phosphothreonine.

Its subcellular location is the cytoplasm. The chain is Protein ITPRID2 (Itprid2) from Mus musculus (Mouse).